Reading from the N-terminus, the 122-residue chain is Large ribosomal subunit protein uL14 (122 aa).

It belongs to the universal ribosomal protein uL14 family. In terms of assembly, part of the 50S ribosomal subunit. Forms a cluster with proteins L3 and L19. In the 70S ribosome, L14 and L19 interact and together make contacts with the 16S rRNA in bridges B5 and B8.

Binds to 23S rRNA. Forms part of two intersubunit bridges in the 70S ribosome. This Acinetobacter baumannii (strain AB307-0294) protein is Large ribosomal subunit protein uL14.